Reading from the N-terminus, the 869-residue chain is NACHT, LRR and PYD domains-containing protein 6 (869 aa).

The region spanning 37–128 (KLRDAPLDGR…REHVLRQHAK (92 aa)) is the Pyrin domain. An NACHT domain is found at 194–511 (LTVVLQGPAG…EFLAALSYLL (318 aa)). Position 200–207 (200–207 (GPAGIGKT)) interacts with ATP. Residues 350 to 354 (KDKKK) are disordered. Residues 460 to 485 (EEDLEKLKLRGSQVQTIFLNKKEIPG) form an LRR 1 repeat. The segment at 577 to 608 (VQGQSHPKGPPVGAKKTAELEDIEDAEEEEEE) is disordered. The span at 596–608 (LEDIEDAEEEEEE) shows a compositional bias: acidic residues. LRR repeat units lie at residues 635-658 (LSSL…VLNY) and 837-860 (TLSL…KTSK).

Belongs to the NLRP family. As to quaternary structure, homomultimer; forms the NLRP6 inflammasome polymeric complex, a filament composed of homopolymers in response to pathogens and other damage-associated signals. The core of NLRP6 inflammasomes consists of a signal sensor component (NLRP6), an adapter (PYCARD/ASC), which recruits effector pro-inflammatory caspases (CASP1 and CASP4). Interacts (via pyrin domain) with PYCARD/ASC (via pyrin domain); interaction takes place following NLRP6 activation and formation of liquid-liquid phase separation (LLPS), initiating nucleation which greatly enhances further addition of soluble PYCARD/ASC molecules to the speck in a prion-like polymerization process. Clustered PYCARD/ASC nucleates the formation of CASP1 (or possibly CASP4) filaments through the interaction of their respective CARD domains, acting as a platform for CASP1 polymerization. CASP1 filament formation increases local enzyme concentration, resulting in trans-autocleavage and activation. Active CASP1 then processes IL1B and IL18 precursors, leading to the release of mature cytokines in the extracellular milieu and inflammatory response. Interacts with DHX15. Post-translationally, polyubiquitinated with 'Lys-63'-linked chains, promoting the interaction with PYCARD/ASC and formation of the NLRP6 inflammasome. Deubiquitination by CYLD decreases the interaction with PYCARD/ASC. As to expression, highly expressed in the gastrointestinal tract, predominantly in colonic myofibroblasts and in colonic epithelial and endothelial cells. Within the intestinal mucosa, highly expressed by goblet cells. Also expressed in hepatocytes and in immune cells, including CD4(+) and CD8(+) T-cells, dendritic cells, mastocytes and peritoneal macrophages, as well as in lung, kidney, bladder and gonads.

The protein resides in the cytoplasm. It is found in the inflammasome. The protein localises to the cell membrane. Its subcellular location is the nucleus membrane. Its function is as follows. Acts as the sensor component of the NLRP6 inflammasome, which mediates inflammasome activation in response to various pathogen-associated signals, leading to maturation and secretion of IL1B and IL18. Inflammasomes are supramolecular complexes that assemble in the cytosol in response to pathogens and other damage-associated signals and play critical roles in innate immunity and inflammation. Acts as a recognition receptor (PRR): recognizes and binds specific pathogens and other damage-associated signals, such as lipoteichoic acid (LTA), a cell-wall component of Gram-positive bacteria, or double stranded RNA (dsRNA). May also recognize and bind lipopolysaccharide (LPS), a major component of the outer membrane of Gram-negative bacteria; however, LPS is probably not a major activator of the NLRP6 inflammasome. Following LTA- or dsRNA-binding, NLRP6 undergoes liquid-liquid phase separation (LLPS), enhancing multivalent interactions, an essential step for the formation of the NLRP6 inflammasome polymeric complex. The NLRP6 inflammasome acts by promoting recruitment of effector pro-inflammatory caspases (CASP1 and/or CASP4) that catalyze maturation and secretion of IL1B and IL18 in the extracellular milieu. The NLRP6 inflammasome plays a central role in the maintenance of epithelial integrity and host defense against microbial infections in the intestine. Required to restrict infection against Gram-positive bacteria by recognizing lipoteichoic acid (LTA), leading to recruitment of CASP4 and CASP1, and subsequent maturation and secretion of IL1B and IL18. Involved in intestinal antiviral innate immunity together with DHX15: recognizes and binds viral dsRNA to restrict infection by enteric viruses through the interferon pathway and GSDMD-dependent release of IL18. Required to prevent infection by the apicomplexan parasite C.tyzzeri in enterocytes by promoting GSDMD-dependent release of IL18. The NLRP6 inflammasome may also regulate the gut microbiota composition by acting as a sensor of microbiota-associated metabolites to form a PYCARD/ASC-dependent inflammasome for downstream IL18 release and secretion of antimicrobial peptides. Its role in the regulation of the gut microbiota composition is however subject to discussion. Essential for gut mucosal self-renewal and proliferation. Regulate mucus secretion in an inflammasome- and autophagy-dependent manner to prevent invasion by enteric bacteria. During systemic bacterial infections, the NLRP6 inflammasome negatively regulates neutrophil recruitment and neutrophil extracellular traps (NETs) formation. May promote peripheral nerve recovery following injury via an inflammasome-independent mechanism. In Mus musculus (Mouse), this protein is NACHT, LRR and PYD domains-containing protein 6.